A 423-amino-acid polypeptide reads, in one-letter code: D-tagatose-1,6-bisphosphate aldolase subunit GatZ (423 aa).

The protein belongs to the GatZ/KbaZ family. GatZ subfamily. As to quaternary structure, forms a complex with GatY.

It participates in carbohydrate metabolism; D-tagatose 6-phosphate degradation; D-glyceraldehyde 3-phosphate and glycerone phosphate from D-tagatose 6-phosphate: step 2/2. Its function is as follows. Component of the tagatose-1,6-bisphosphate aldolase GatYZ that is required for full activity and stability of the Y subunit. Could have a chaperone-like function for the proper and stable folding of GatY. When expressed alone, GatZ does not show any aldolase activity. Is involved in the catabolism of galactitol. The chain is D-tagatose-1,6-bisphosphate aldolase subunit GatZ from Salmonella agona (strain SL483).